A 713-amino-acid chain; its full sequence is Glycine--tRNA ligase beta subunit (713 aa).

This sequence belongs to the class-II aminoacyl-tRNA synthetase family. Tetramer of two alpha and two beta subunits.

It localises to the cytoplasm. The enzyme catalyses tRNA(Gly) + glycine + ATP = glycyl-tRNA(Gly) + AMP + diphosphate. This is Glycine--tRNA ligase beta subunit from Picosynechococcus sp. (strain ATCC 27264 / PCC 7002 / PR-6) (Agmenellum quadruplicatum).